The following is a 233-amino-acid chain: Ribosomal RNA-processing protein 14-C (233 aa).

A coiled-coil region spans residues 32 to 65; the sequence is DRALLLQRRKEKAKARAEAKKLAKKESKAKQESK. Residues 47–64 are compositionally biased toward basic and acidic residues; that stretch reads RAEAKKLAKKESKAKQES. Disordered regions lie at residues 47–87, 130–149, and 164–233; these read RAEA…DNHK, KRRI…ESDK, and DNEQ…SKKK. Ser-75 is modified (phosphoserine). Residues 122–223 are a coiled coil; that stretch reads ALKHLEAKKR…ESKKSKKGKA (102 aa). Composition is skewed to basic and acidic residues over residues 133–149 and 180–209; these read IESM…ESDK and KKKS…EENL. The span at 210-233 shows a compositional bias: basic residues; that stretch reads KKRRESKKSKKGKAPKKKKPSKKK.

It belongs to the SURF6 family. In terms of assembly, component of the 90S and 60S pre-ribosomal particles.

The protein resides in the nucleus. Its subcellular location is the nucleolus. In terms of biological role, involved in ribosome biogenesis and cell polarity. Required for the synthesis of both 40S and 60S ribosomal subunits and may also play some direct role in correct positioning of the mitotic spindle during mitosis. The polypeptide is Ribosomal RNA-processing protein 14-C (rrp14c) (Schizosaccharomyces pombe (strain 972 / ATCC 24843) (Fission yeast)).